A 350-amino-acid polypeptide reads, in one-letter code: Peroxidase 24 (350 aa).

Positions 1–27 (MANKSLEIRFLFPLVLFLVVKLLCVDG) are cleaved as a signal peptide. Cystine bridges form between cysteine 55–cysteine 135, cysteine 88–cysteine 93, cysteine 141–cysteine 346, and cysteine 221–cysteine 253. Residue asparagine 73 is glycosylated (N-linked (GlcNAc...) asparagine). The active-site Proton acceptor is the histidine 86. Ca(2+) is bound by residues aspartate 87, valine 90, glycine 92, aspartate 94, and serine 96. Proline 184 is a substrate binding site. The N-linked (GlcNAc...) asparagine glycan is linked to asparagine 189. Histidine 214 lines the heme b pocket. Threonine 215 is a binding site for Ca(2+). N-linked (GlcNAc...) asparagine glycosylation occurs at asparagine 230. Positions 269 and 277 each coordinate Ca(2+).

The protein belongs to the peroxidase family. Classical plant (class III) peroxidase subfamily. Requires heme b as cofactor. It depends on Ca(2+) as a cofactor.

The protein resides in the secreted. It carries out the reaction 2 a phenolic donor + H2O2 = 2 a phenolic radical donor + 2 H2O. Its function is as follows. Removal of H(2)O(2), oxidation of toxic reductants, biosynthesis and degradation of lignin, suberization, auxin catabolism, response to environmental stresses such as wounding, pathogen attack and oxidative stress. These functions might be dependent on each isozyme/isoform in each plant tissue. This chain is Peroxidase 24 (PER24), found in Arabidopsis thaliana (Mouse-ear cress).